A 194-amino-acid polypeptide reads, in one-letter code: Orotate phosphoribosyltransferase (194 aa).

117–125 (EDIVTTGLS) lines the 5-phospho-alpha-D-ribose 1-diphosphate pocket. 2 residues coordinate orotate: Thr-121 and Arg-149.

This sequence belongs to the purine/pyrimidine phosphoribosyltransferase family. PyrE subfamily. Homodimer. Requires Mg(2+) as cofactor.

The enzyme catalyses orotidine 5'-phosphate + diphosphate = orotate + 5-phospho-alpha-D-ribose 1-diphosphate. The protein operates within pyrimidine metabolism; UMP biosynthesis via de novo pathway; UMP from orotate: step 1/2. Its function is as follows. Catalyzes the transfer of a ribosyl phosphate group from 5-phosphoribose 1-diphosphate to orotate, leading to the formation of orotidine monophosphate (OMP). The protein is Orotate phosphoribosyltransferase of Parvibaculum lavamentivorans (strain DS-1 / DSM 13023 / NCIMB 13966).